We begin with the raw amino-acid sequence, 234 residues long: Isoprenyl transferase (234 aa).

Asp-13 is an active-site residue. Asp-13 is a binding site for Mg(2+). Substrate-binding positions include 14–17, Trp-18, Arg-26, His-30, and 58–60; these read GNGR and STE. Residue Asn-61 is the Proton acceptor of the active site. Substrate-binding positions include Trp-62, Arg-64, Arg-180, and 186–188; that span reads RLS. Mg(2+) is bound at residue Glu-199.

The protein belongs to the UPP synthase family. Homodimer. Mg(2+) serves as cofactor.

Functionally, catalyzes the condensation of isopentenyl diphosphate (IPP) with allylic pyrophosphates generating different type of terpenoids. The chain is Isoprenyl transferase (uppS) from Helicobacter pylori (strain ATCC 700392 / 26695) (Campylobacter pylori).